We begin with the raw amino-acid sequence, 262 residues long: MRYKNMFETLKKQEKMAFIPFVTLGDPNYALSFEIVKTLIASGVSALELGFAFSDPVADGVTIQASHLRALKHASMAKNFQLLRAIRDYNPHIPIGLLAYANLIFSYGVDNFYAQIKECGVDSVLIADMPLIEKELVLKSAQKHQIKQIFIASPNASNKDLERAAMHSQGYIYTLARSGVTGASRILENDASAIIKTLKTFSPTPALLGFGISKKEHIKNAKGMGADGVICGSALVKIIEENLNDENAMLERIKGFIGEMIS.

Active-site proton acceptor residues include glutamate 48 and aspartate 59.

It belongs to the TrpA family. Tetramer of two alpha and two beta chains.

It carries out the reaction (1S,2R)-1-C-(indol-3-yl)glycerol 3-phosphate + L-serine = D-glyceraldehyde 3-phosphate + L-tryptophan + H2O. It participates in amino-acid biosynthesis; L-tryptophan biosynthesis; L-tryptophan from chorismate: step 5/5. Its function is as follows. The alpha subunit is responsible for the aldol cleavage of indoleglycerol phosphate to indole and glyceraldehyde 3-phosphate. The sequence is that of Tryptophan synthase alpha chain from Helicobacter pylori (strain Shi470).